A 127-amino-acid polypeptide reads, in one-letter code: Small ribosomal subunit protein uS13 (127 aa).

Positions 93–127 (RRSLPVRGQRTHTNARTRKGPRKGTVANKKKATAK) are disordered.

Belongs to the universal ribosomal protein uS13 family. Part of the 30S ribosomal subunit. Forms a loose heterodimer with protein S19. Forms two bridges to the 50S subunit in the 70S ribosome.

Functionally, located at the top of the head of the 30S subunit, it contacts several helices of the 16S rRNA. In the 70S ribosome it contacts the 23S rRNA (bridge B1a) and protein L5 of the 50S subunit (bridge B1b), connecting the 2 subunits; these bridges are implicated in subunit movement. Contacts the tRNAs in the A and P-sites. This chain is Small ribosomal subunit protein uS13, found in Koribacter versatilis (strain Ellin345).